A 1025-amino-acid polypeptide reads, in one-letter code: Dihydropyrimidine dehydrogenase [NADP(+)] (1025 aa).

The propeptide occupies 1 to 3 (MAP). The 4Fe-4S ferredoxin-type 1 domain maps to 69–100 (ERGALREAMRCLKCADAPCQKSCPTHLDIKSF). Positions 79, 82, 87, and 91 each coordinate [4Fe-4S] cluster. FAD is bound at residue V129. C130, C136, C140, and Q156 together coordinate [4Fe-4S] cluster. FAD is bound by residues 194-198 (GAGPA), 218-226 (EKQEYVGGL), R235, and L261. Residues 340 to 343 (AGDT), 364 to 365 (RK), and R371 each bind NADP(+). Residue K384 is modified to N6-acetyllysine. Residues 437–439 (AFG) and 481–487 (DIVGMAN) each bind NADP(+). FAD is bound at residue 480-489 (GDIVGMANTT). FMN-binding positions include S550 and 574-575 (KT). Substrate is bound by residues N609 and 668-670 (NLS). C671 functions as the Proton acceptor in the catalytic mechanism. An FMN-binding site is contributed by K709. A substrate-binding site is contributed by 736-737 (NT). Residues G767, 793-795 (TGG), and 816-817 (CS) each bind FMN. 4Fe-4S ferredoxin-type domains lie at 944-976 (VVAV…FDPE) and 978-1007 (HLPT…MVSR). [4Fe-4S] cluster-binding residues include C953, C956, C959, C963, C986, C989, C992, and C996.

Belongs to the dihydropyrimidine dehydrogenase family. As to quaternary structure, homodimer. Requires FAD as cofactor. FMN serves as cofactor. [4Fe-4S] cluster is required as a cofactor.

The protein localises to the cytoplasm. The enzyme catalyses 5,6-dihydrouracil + NADP(+) = uracil + NADPH + H(+). It carries out the reaction 5,6-dihydrothymine + NADP(+) = thymine + NADPH + H(+). It participates in amino-acid biosynthesis; beta-alanine biosynthesis. Inactivated by 5-iodouracil. Involved in pyrimidine base degradation. Catalyzes the reduction of uracil and thymine. The protein is Dihydropyrimidine dehydrogenase [NADP(+)] (DPYD) of Sus scrofa (Pig).